A 378-amino-acid polypeptide reads, in one-letter code: Spermidine/putrescine import ATP-binding protein PotA (378 aa).

An ABC transporter domain is found at 18-248 (VQLAGIRKCF…PKNLFVAGFI (231 aa)). Residue 50 to 57 (GPSGCGKT) coordinates ATP.

Belongs to the ABC transporter superfamily. Spermidine/putrescine importer (TC 3.A.1.11.1) family. In terms of assembly, the complex is composed of two ATP-binding proteins (PotA), two transmembrane proteins (PotB and PotC) and a solute-binding protein (PotD).

It is found in the cell inner membrane. The enzyme catalyses ATP + H2O + polyamine-[polyamine-binding protein]Side 1 = ADP + phosphate + polyamineSide 2 + [polyamine-binding protein]Side 1.. Functionally, part of the ABC transporter complex PotABCD involved in spermidine/putrescine import. Responsible for energy coupling to the transport system. This chain is Spermidine/putrescine import ATP-binding protein PotA, found in Shigella flexneri.